The sequence spans 73 residues: Translation initiation factor IF-1 2 (73 aa).

The region spanning M1–K72 is the S1-like domain.

The protein belongs to the IF-1 family. Component of the 30S ribosomal translation pre-initiation complex which assembles on the 30S ribosome in the order IF-2 and IF-3, IF-1 and N-formylmethionyl-tRNA(fMet); mRNA recruitment can occur at any time during PIC assembly.

It is found in the cytoplasm. One of the essential components for the initiation of protein synthesis. Stabilizes the binding of IF-2 and IF-3 on the 30S subunit to which N-formylmethionyl-tRNA(fMet) subsequently binds. Helps modulate mRNA selection, yielding the 30S pre-initiation complex (PIC). Upon addition of the 50S ribosomal subunit IF-1, IF-2 and IF-3 are released leaving the mature 70S translation initiation complex. The chain is Translation initiation factor IF-1 2 from Cupriavidus pinatubonensis (strain JMP 134 / LMG 1197) (Cupriavidus necator (strain JMP 134)).